The sequence spans 390 residues: Probable tRNA pseudouridine synthase D 2 (390 aa).

D93 acts as the Nucleophile in catalysis. In terms of domain architecture, TRUD spans 166–353 (YVLNYYGIQR…YGTRRKMVTP (188 aa)).

The protein belongs to the pseudouridine synthase TruD family.

The catalysed reaction is uridine(13) in tRNA = pseudouridine(13) in tRNA. Could be responsible for synthesis of pseudouridine from uracil-13 in transfer RNAs. The polypeptide is Probable tRNA pseudouridine synthase D 2 (Methanococcus maripaludis (strain DSM 14266 / JCM 13030 / NBRC 101832 / S2 / LL)).